We begin with the raw amino-acid sequence, 229 residues long: Octanoyltransferase (229 aa).

Positions 45–220 (ATAVDELWVV…ELARQFCFVL (176 aa)) constitute a BPL/LPL catalytic domain. Substrate contacts are provided by residues 84–91 (RGGQVTYH), 151–153 (ALG), and 164–166 (GVA). The active-site Acyl-thioester intermediate is cysteine 182.

It belongs to the LipB family.

The protein resides in the cytoplasm. It carries out the reaction octanoyl-[ACP] + L-lysyl-[protein] = N(6)-octanoyl-L-lysyl-[protein] + holo-[ACP] + H(+). It functions in the pathway protein modification; protein lipoylation via endogenous pathway; protein N(6)-(lipoyl)lysine from octanoyl-[acyl-carrier-protein]: step 1/2. Functionally, catalyzes the transfer of endogenously produced octanoic acid from octanoyl-acyl-carrier-protein onto the lipoyl domains of lipoate-dependent enzymes. Lipoyl-ACP can also act as a substrate although octanoyl-ACP is likely to be the physiological substrate. This Xylella fastidiosa (strain 9a5c) protein is Octanoyltransferase.